The sequence spans 207 residues: MRPLTPRQAEILDLIKRNIAETGMPPTRAEIASRLGFKSANAAEEHLKALAKKGCIEIMPGTSRGIRLAGDELEDQPDPGLPLIGQVAAGEPILAQEHVEQYYQVDPAMFRPHADFLLRVRGDSMKDIGILDGDLLAVHKMNQARNGQVVVARVEDDVTVKRFEKQGNVVYLHAENEAFAPIRVDLANQSLTIEGLAVGVIRNGDWL.

Positions 28–48 form a DNA-binding region, H-T-H motif; sequence RAEIASRLGFKSANAAEEHLK. Residues S124 and K161 each act as for autocatalytic cleavage activity in the active site.

The protein belongs to the peptidase S24 family. Homodimer.

The catalysed reaction is Hydrolysis of Ala-|-Gly bond in repressor LexA.. Functionally, represses a number of genes involved in the response to DNA damage (SOS response), including recA and lexA. In the presence of single-stranded DNA, RecA interacts with LexA causing an autocatalytic cleavage which disrupts the DNA-binding part of LexA, leading to derepression of the SOS regulon and eventually DNA repair. This chain is LexA repressor, found in Shewanella amazonensis (strain ATCC BAA-1098 / SB2B).